Here is a 198-residue protein sequence, read N- to C-terminus: Recombination protein RecR (198 aa).

A C4-type zinc finger spans residues 57 to 72; the sequence is CSTCQTLTDQDPCAIC. The Toprim domain maps to 80–175; it reads RMICVVEGVP…KVTRIAQGVP (96 aa).

It belongs to the RecR family.

Its function is as follows. May play a role in DNA repair. It seems to be involved in an RecBC-independent recombinational process of DNA repair. It may act with RecF and RecO. This chain is Recombination protein RecR, found in Anaeromyxobacter dehalogenans (strain 2CP-C).